A 508-amino-acid polypeptide reads, in one-letter code: Photosystem II CP47 reaction center protein (508 aa).

A run of 6 helical transmembrane segments spans residues 21–36 (SVHI…WAGS), 101–115 (IVFS…IWHW), 140–156 (GIHL…FGAF), 203–218 (IAAG…FHLS), 237–252 (VLSS…AFVV), and 457–472 (TFAL…HGAR).

It belongs to the PsbB/PsbC family. PsbB subfamily. As to quaternary structure, PSII is composed of 1 copy each of membrane proteins PsbA, PsbB, PsbC, PsbD, PsbE, PsbF, PsbH, PsbI, PsbJ, PsbK, PsbL, PsbM, PsbT, PsbX, PsbY, PsbZ, Psb30/Ycf12, at least 3 peripheral proteins of the oxygen-evolving complex and a large number of cofactors. It forms dimeric complexes. It depends on Binds multiple chlorophylls. PSII binds additional chlorophylls, carotenoids and specific lipids. as a cofactor.

The protein localises to the plastid. The protein resides in the chloroplast thylakoid membrane. Functionally, one of the components of the core complex of photosystem II (PSII). It binds chlorophyll and helps catalyze the primary light-induced photochemical processes of PSII. PSII is a light-driven water:plastoquinone oxidoreductase, using light energy to abstract electrons from H(2)O, generating O(2) and a proton gradient subsequently used for ATP formation. This is Photosystem II CP47 reaction center protein from Drimys granadensis.